The sequence spans 218 residues: Ribose-5-phosphate isomerase A (218 aa).

Residues 28–31, 81–84, and 94–97 contribute to the substrate site; these read TGST, DGAD, and KGGG. E103 acts as the Proton acceptor in catalysis. K121 lines the substrate pocket.

This sequence belongs to the ribose 5-phosphate isomerase family. As to quaternary structure, homodimer.

It carries out the reaction aldehydo-D-ribose 5-phosphate = D-ribulose 5-phosphate. Its pathway is carbohydrate degradation; pentose phosphate pathway; D-ribose 5-phosphate from D-ribulose 5-phosphate (non-oxidative stage): step 1/1. Functionally, catalyzes the reversible conversion of ribose-5-phosphate to ribulose 5-phosphate. This is Ribose-5-phosphate isomerase A from Vibrio cholerae serotype O1 (strain ATCC 39541 / Classical Ogawa 395 / O395).